A 177-amino-acid polypeptide reads, in one-letter code: Adenine phosphoribosyltransferase (177 aa).

Belongs to the purine/pyrimidine phosphoribosyltransferase family. In terms of assembly, homodimer.

Its subcellular location is the cytoplasm. The catalysed reaction is AMP + diphosphate = 5-phospho-alpha-D-ribose 1-diphosphate + adenine. The protein operates within purine metabolism; AMP biosynthesis via salvage pathway; AMP from adenine: step 1/1. Functionally, catalyzes a salvage reaction resulting in the formation of AMP, that is energically less costly than de novo synthesis. This chain is Adenine phosphoribosyltransferase, found in Prosthecochloris aestuarii (strain DSM 271 / SK 413).